Consider the following 307-residue polypeptide: Probable RuBisCO transcriptional regulator (307 aa).

The region spanning 4-61 (FTLQQLRILKAVATEKNFTKAAELLYLSQPSLSKQIKTLEKNLDILLVNRENNKISLT) is the HTH lysR-type domain. The H-T-H motif DNA-binding region spans 21–40 (FTKAAELLYLSQPSLSKQIK).

The protein belongs to the LysR transcriptional regulatory family.

It localises to the plastid. The protein resides in the chloroplast. Functionally, trans-acting transcriptional regulator of RuBisCO genes (rbcL and rbcS) expression. This is Probable RuBisCO transcriptional regulator (rbcR) from Phaeodactylum tricornutum (strain CCAP 1055/1).